A 541-amino-acid chain; its full sequence is Zinc finger protein 503 (541 aa).

The segment covering 1–18 has biased composition (polar residues); it reads MSNSPLGSGSRISHFTTE. Disordered stretches follow at residues 1 to 49 and 97 to 255; these read MSNS…QAGR and TCSQ…SSSV. Positions 137–157 are enriched in basic and acidic residues; that stretch reads AEDKSSFKPYSKHPDKKDQSA. Positions 236–255 are enriched in low complexity; it reads SLSAAPSPTPASSSSSSSSV. The C2H2-type zinc finger occupies 411-439; sequence HVCNWVSATGPCDKRFSSSEELLGHLRTH. Residues 474 to 511 form a disordered region; it reads GASPGPLTLRSPHHHPLGLSSSRYHPYSKSPLPSGGAP.

This sequence belongs to the Elbow/Noc family.

It localises to the nucleus. In terms of biological role, may function as a transcriptional repressor. This is Zinc finger protein 503 (znf503) from Xenopus tropicalis (Western clawed frog).